The sequence spans 141 residues: Protein X (141 aa).

A disordered region spans residues 25-52; it reads SSGPSFPRPAAGSAASSASSPSPSDDSD. The segment at 68–113 is mitochondrial targeting sequence; the sequence is PCCLVFTCADLRTMDSTVNFVSWHANRQLGMPSKDLWTPYIKDQLL.

It belongs to the orthohepadnavirus protein X family. As to quaternary structure, may form homodimer. May interact with host CEBPA, CFLAR, CREB1, DDB1, E4F1, HBXIP, HSPD1/HSP60, NFKBIA, POLR2E and SMAD4. Interacts with host SMC5-SMC6 complex and induces its degradation. Interacts with host TRPC4AP; leading to prevent ubiquitination of TRPC4AP. Interacts with host PLSCR1; this interaction promotes ubiquitination and degradation of HBx and impairs HBx-mediated cell proliferation. In terms of processing, a fraction may be phosphorylated in insect cells and HepG2 cells, a human hepatoblastoma cell line. Phosphorylated in vitro by host protein kinase C or mitogen-activated protein kinase. N-acetylated in insect cells.

It is found in the host cytoplasm. It localises to the host nucleus. Its subcellular location is the host mitochondrion. In terms of biological role, multifunctional protein that plays a role in silencing host antiviral defenses and promoting viral transcription. Does not seem to be essential for HBV infection. May be directly involved in development of cirrhosis and liver cancer (hepatocellular carcinoma). Most of cytosolic activities involve modulation of cytosolic calcium. The effect on apoptosis is controversial depending on the cell types in which the studies have been conducted. May induce apoptosis by localizing in mitochondria and causing loss of mitochondrial membrane potential. May also modulate apoptosis by binding host CFLAR, a key regulator of the death-inducing signaling complex (DISC). Promotes viral transcription by using the host E3 ubiquitin ligase DDB1 to target the SMC5-SMC6 complex to proteasomal degradation. This host complex would otherwise bind to viral episomal DNA, and prevents its transcription. Moderately stimulates transcription of many different viral and cellular transcription elements. Promoters and enhancers stimulated by HBx contain DNA binding sites for NF-kappa-B, AP-1, AP-2, c-EBP, ATF/CREB, or the calcium-activated factor NF-AT. The polypeptide is Protein X (Woodchuck hepatitis B virus (isolate 2) (WHV)).